We begin with the raw amino-acid sequence, 1417 residues long: Cytoadherence-linked asexual protein 3.1 (1417 aa).

The N-terminal stretch at 1-24 (MVSFFKTPIFILIIFLYLNEKVIC) is a signal peptide. Disulfide bonds link cysteine 333-cysteine 361, cysteine 407-cysteine 413, cysteine 517-cysteine 545, and cysteine 521-cysteine 542. A helical transmembrane segment spans residues 1204–1224 (LVNGFMYAFCFFAISQMYAYF). A disordered region spans residues 1383–1417 (TYIDTEKMNEADSADSDDEKDSDTPDDELMISRFH). Positions 1394-1411 (DSADSDDEKDSDTPDDEL) are enriched in acidic residues.

Self-associates. Component of the RhopH complex. RhopH complex is at least composed of CLAG3.1/CLAG3.2, RhopH2 and RhopH3 with a 1:1:1 subunit stoichiometry. CLAG3.1/CLAG3.2 mediates subunit association through independent contacts with RhopH2 and RhopH3, which do not directly interact with one another. Interacts with RhopH2. Interacts with RhopH3.

The protein localises to the host cell membrane. Its subcellular location is the host cytoplasm. It is found in the cytoplasmic vesicle. The protein resides in the secretory vesicle. It localises to the rhoptry. In terms of biological role, participates in the formation of new permeability pathways in Plasmodium-infected erythrocytes enabling the uptake of nutrients from the blood plasma. This Plasmodium falciparum (isolate 3D7) protein is Cytoadherence-linked asexual protein 3.1.